Here is a 116-residue protein sequence, read N- to C-terminus: Large ribosomal subunit protein bL19 (116 aa).

It belongs to the bacterial ribosomal protein bL19 family.

In terms of biological role, this protein is located at the 30S-50S ribosomal subunit interface and may play a role in the structure and function of the aminoacyl-tRNA binding site. The protein is Large ribosomal subunit protein bL19 of Streptomyces avermitilis (strain ATCC 31267 / DSM 46492 / JCM 5070 / NBRC 14893 / NCIMB 12804 / NRRL 8165 / MA-4680).